Reading from the N-terminus, the 691-residue chain is Histone-lysine N-methyltransferase Set8 (691 aa).

Residues 1 to 29 form a disordered region; the sequence is MIMVRRRQRPAKEAASSSSGGASSGSGIP. Over residues 14–27 the composition is skewed to low complexity; the sequence is AASSSSGGASSGSG. Residues serine 195 and serine 250 each carry the phosphoserine modification. Phosphothreonine is present on threonine 252. A Phosphoserine modification is found at serine 281. Disordered stretches follow at residues 341–363, 382–401, 407–437, and 464–516; these read TANT…HRIL, GSAD…TTTA, KSRR…QQQQ, and AEER…ATNG. Threonine 344 bears the Phosphothreonine mark. A phosphoserine mark is found at serine 346, serine 383, serine 388, and serine 392. Polar residues-rich tracts occupy residues 421–430 and 471–481; these read YQPQLQKPPS and NKAPATANSNK. The SET domain occupies 555–676; it reads DGLQVRHFMG…PGEELTYDYG (122 aa). S-adenosyl-L-methionine is bound by residues 565–567, tyrosine 610, and 637–638; these read KGR and NH.

It belongs to the class V-like SAM-binding methyltransferase superfamily. Histone-lysine methyltransferase family. PR/SET subfamily.

It is found in the nucleus. The protein localises to the chromosome. It catalyses the reaction L-lysyl(20)-[histone H4] + S-adenosyl-L-methionine = N(6)-methyl-L-lysyl(20)-[histone H4] + S-adenosyl-L-homocysteine + H(+). In terms of biological role, histone methyltransferase that specifically monomethylates 'Lys-20' of histone H4. H4 'Lys-20' monomethylation is enriched during mitosis and represents a specific tag for epigenetic transcriptional repression. Mainly functions in euchromatin regions, thereby playing a central role in the silencing of euchromatic genes. Required for cell proliferation, possibly by contributing to the maintenance of proper higher-order structure of DNA and chromosome condensation during mitosis. The chain is Histone-lysine N-methyltransferase Set8 from Drosophila melanogaster (Fruit fly).